We begin with the raw amino-acid sequence, 354 residues long: Peptide chain release factor 1 (354 aa).

N5-methylglutamine is present on Gln-232.

It belongs to the prokaryotic/mitochondrial release factor family. In terms of processing, methylated by PrmC. Methylation increases the termination efficiency of RF1.

The protein resides in the cytoplasm. In terms of biological role, peptide chain release factor 1 directs the termination of translation in response to the peptide chain termination codons UAG and UAA. This Jannaschia sp. (strain CCS1) protein is Peptide chain release factor 1.